The following is a 217-amino-acid chain: MGQKVHPIGMRVGIIRDWDAKWYAEKEYADYLHEDLAIRKFIQKELAEASVSTIEIERAINKVIVSLHTAKPGMVIGKGGANVDALRAQLNKLTGKQVHINIIEIKSPDLDAHLVGENIARQLEQRVAFRRAQKQAIQRTMRAGAKGIKTQVSGRLNGADIARAEGYSEGTVPLHTLRADIDYAWEEADTTYGKLGVKVWIYRGEVLPARKNTKGGK.

In terms of domain architecture, KH type-2 spans Ile38 to Lys106.

This sequence belongs to the universal ribosomal protein uS3 family. Part of the 30S ribosomal subunit. Forms a tight complex with proteins S10 and S14.

Its function is as follows. Binds the lower part of the 30S subunit head. Binds mRNA in the 70S ribosome, positioning it for translation. In Streptococcus uberis (strain ATCC BAA-854 / 0140J), this protein is Small ribosomal subunit protein uS3.